The following is a 337-amino-acid chain: MNTEATHDQNEALTTGARLRNAREQLGLSQQAVAERLCLKVSTVRDIEEDKAPADLASTFLRGYIRSYARLVHIPEEELLPGLEKQAPLRAAKVAPMQSFSLGKRRKKRDGWLMTFTWLVLFVVIGLSGAWWWQDHKAQQEEITTMADQSSAELSSNSEQGQSVPLNTSTTTDPATTSTPPASVDTTATNTQTPAVTAPAPAVDPQQNAVVSPSQANVDTAATPVPTAATTPDGAAPLPTDQAGVTTPVADPNALVMNFTADCWLEVTDATGKKLFSGMQRKDGNLNLTGQAPYKLKIGAPAAVQIQYQGKPVDLSRFIRTNQVARLTLNAEQSPAQ.

At 1–111 (MNTEATHDQN…LGKRRKKRDG (111 aa)) the chain is on the cytoplasmic side. The 53-residue stretch at 19-71 (LRNAREQLGLSQQAVAERLCLKVSTVRDIEEDKAPADLASTFLRGYIRSYARL) folds into the HTH cro/C1-type domain. Residues 30–49 (QQAVAERLCLKVSTVRDIEE) constitute a DNA-binding region (H-T-H motif). A helical; Signal-anchor for type II membrane protein membrane pass occupies residues 112 to 132 (WLMTFTWLVLFVVIGLSGAWW). The Periplasmic segment spans residues 133–337 (WQDHKAQQEE…TLNAEQSPAQ (205 aa)). Positions 145 to 167 (TMADQSSAELSSNSEQGQSVPLN) are enriched in polar residues. Residues 145–218 (TMADQSSAEL…AVVSPSQANV (74 aa)) are disordered. The segment covering 168 to 207 (TSTTTDPATTSTPPASVDTTATNTQTPAVTAPAPAVDPQQ) has biased composition (low complexity). The span at 208 to 218 (NAVVSPSQANV) shows a compositional bias: polar residues.

Belongs to the RodZ family.

It is found in the cell inner membrane. Cytoskeletal protein that is involved in cell-shape control through regulation of the length of the long axis. The sequence is that of Cytoskeleton protein RodZ from Shigella dysenteriae serotype 1 (strain Sd197).